Here is a 900-residue protein sequence, read N- to C-terminus: Phosphoenolpyruvate carboxylase (900 aa).

Residues His-140 and Lys-568 contribute to the active site.

This sequence belongs to the PEPCase type 1 family. It depends on Mg(2+) as a cofactor.

The enzyme catalyses oxaloacetate + phosphate = phosphoenolpyruvate + hydrogencarbonate. Its function is as follows. Forms oxaloacetate, a four-carbon dicarboxylic acid source for the tricarboxylic acid cycle. The chain is Phosphoenolpyruvate carboxylase from Neisseria meningitidis serogroup A / serotype 4A (strain DSM 15465 / Z2491).